The following is a 459-amino-acid chain: tRNA modification GTPase MnmE (459 aa).

(6S)-5-formyl-5,6,7,8-tetrahydrofolate-binding residues include arginine 20, glutamate 85, and arginine 124. A TrmE-type G domain is found at glycine 221–phenylalanine 380. Asparagine 231 provides a ligand contact to K(+). GTP contacts are provided by residues asparagine 231–serine 236, threonine 250–threonine 256, and aspartate 275–glycine 278. Serine 235 contributes to the Mg(2+) binding site. The K(+) site is built by threonine 250, isoleucine 252, and threonine 255. Threonine 256 contacts Mg(2+). A (6S)-5-formyl-5,6,7,8-tetrahydrofolate-binding site is contributed by lysine 459.

This sequence belongs to the TRAFAC class TrmE-Era-EngA-EngB-Septin-like GTPase superfamily. TrmE GTPase family. As to quaternary structure, homodimer. Heterotetramer of two MnmE and two MnmG subunits. K(+) serves as cofactor.

It localises to the cytoplasm. In terms of biological role, exhibits a very high intrinsic GTPase hydrolysis rate. Involved in the addition of a carboxymethylaminomethyl (cmnm) group at the wobble position (U34) of certain tRNAs, forming tRNA-cmnm(5)s(2)U34. The polypeptide is tRNA modification GTPase MnmE (Bacillus licheniformis (strain ATCC 14580 / DSM 13 / JCM 2505 / CCUG 7422 / NBRC 12200 / NCIMB 9375 / NCTC 10341 / NRRL NRS-1264 / Gibson 46)).